Reading from the N-terminus, the 501-residue chain is Lysine--tRNA ligase (501 aa).

Mg(2+) is bound by residues glutamate 411 and glutamate 418.

Belongs to the class-II aminoacyl-tRNA synthetase family. As to quaternary structure, homodimer. Mg(2+) is required as a cofactor.

It is found in the cytoplasm. It catalyses the reaction tRNA(Lys) + L-lysine + ATP = L-lysyl-tRNA(Lys) + AMP + diphosphate. This Pseudomonas aeruginosa (strain ATCC 15692 / DSM 22644 / CIP 104116 / JCM 14847 / LMG 12228 / 1C / PRS 101 / PAO1) protein is Lysine--tRNA ligase.